We begin with the raw amino-acid sequence, 196 residues long: Dephospho-CoA kinase (196 aa).

The region spanning 6–196 (AIALTGGIGT…QVERFLKTLL (191 aa)) is the DPCK domain. 14 to 19 (GTGKST) serves as a coordination point for ATP.

This sequence belongs to the CoaE family.

Its subcellular location is the cytoplasm. It carries out the reaction 3'-dephospho-CoA + ATP = ADP + CoA + H(+). It participates in cofactor biosynthesis; coenzyme A biosynthesis; CoA from (R)-pantothenate: step 5/5. In terms of biological role, catalyzes the phosphorylation of the 3'-hydroxyl group of dephosphocoenzyme A to form coenzyme A. This Helicobacter pylori (strain J99 / ATCC 700824) (Campylobacter pylori J99) protein is Dephospho-CoA kinase.